A 313-amino-acid chain; its full sequence is 3'-5' exoribonuclease YhaM (313 aa).

The HD domain maps to 163–279 (HVVSMLRLAK…LHQIDLMDAS (117 aa)).

The protein belongs to the YhaM family.

Functionally, shows a 3'-5' exoribonuclease activity. This Listeria welshimeri serovar 6b (strain ATCC 35897 / DSM 20650 / CCUG 15529 / CIP 8149 / NCTC 11857 / SLCC 5334 / V8) protein is 3'-5' exoribonuclease YhaM.